A 124-amino-acid polypeptide reads, in one-letter code: MNNVLFVALGGSIGAVLRYLISLLMLQVFGSGFPFGTLVVNILGSFLMGVIFALGQVSELSPEFKAFIGVGMLGALTTFSTFSNETLLLMQQGYLVKAVFNVVVNVGVCIFVVYLGQQLVFSRF.

A run of 4 helical transmembrane segments spans residues 4–24 (VLFV…ISLL), 35–55 (FGTL…FALG), 62–82 (PEFK…FSTF), and 95–115 (LVKA…VVYL). Residues glycine 74 and threonine 77 each contribute to the Na(+) site.

Belongs to the fluoride channel Fluc/FEX (TC 1.A.43) family.

It localises to the cell inner membrane. The catalysed reaction is fluoride(in) = fluoride(out). Na(+) is not transported, but it plays an essential structural role and its presence is essential for fluoride channel function. In terms of biological role, fluoride-specific ion channel. Important for reducing fluoride concentration in the cell, thus reducing its toxicity. This Shewanella pealeana (strain ATCC 700345 / ANG-SQ1) protein is Fluoride-specific ion channel FluC.